The sequence spans 526 residues: Reelin domain-containing protein 1 (526 aa).

The first 23 residues, 1-23 (MRMQAALVGWACTTLCLASCSSA), serve as a signal peptide directing secretion. Positions 24 to 179 (FSHGASTVAC…SAHSDDRMEP (156 aa)) constitute a Reelin domain. Residues 24–443 (FSHGASTVAC…PLGIQLRTPQ (420 aa)) lie on the Extracellular side of the membrane. 3 disordered regions span residues 242–272 (DAET…PTLE), 294–336 (FASS…TVTQ), and 370–398 (LQTS…LPQS). Residues 245 to 271 (TLSQPSSHTATEGSINQQPSGDSNPTL) are compositionally biased toward polar residues. Over residues 385-396 (SEASRASASFLP) the composition is skewed to polar residues. A helical membrane pass occupies residues 444 to 462 (LGILLCLSATLGMALAAGL). The Cytoplasmic portion of the chain corresponds to 463 to 526 (RYLHTQYCHQ…PSVGSKKTVL (64 aa)).

It is found in the membrane. The protein is Reelin domain-containing protein 1 of Homo sapiens (Human).